The primary structure comprises 204 residues: Large ribosomal subunit protein uL4 (204 aa).

The interval lysine 47–glycine 69 is disordered.

The protein belongs to the universal ribosomal protein uL4 family. Part of the 50S ribosomal subunit.

One of the primary rRNA binding proteins, this protein initially binds near the 5'-end of the 23S rRNA. It is important during the early stages of 50S assembly. It makes multiple contacts with different domains of the 23S rRNA in the assembled 50S subunit and ribosome. Functionally, forms part of the polypeptide exit tunnel. The sequence is that of Large ribosomal subunit protein uL4 from Cellvibrio japonicus (strain Ueda107) (Pseudomonas fluorescens subsp. cellulosa).